The sequence spans 229 residues: UPF0758 protein CA_C1241 (229 aa).

An MPN domain is found at 107-229 (KITSPKEAAN…YISLKEEGLL (123 aa)). Positions 178, 180, and 191 each coordinate Zn(2+). Residues 178-191 (HNHPSGDPKPSNED) carry the JAMM motif motif.

The protein belongs to the UPF0758 family.

The polypeptide is UPF0758 protein CA_C1241 (Clostridium acetobutylicum (strain ATCC 824 / DSM 792 / JCM 1419 / IAM 19013 / LMG 5710 / NBRC 13948 / NRRL B-527 / VKM B-1787 / 2291 / W)).